The chain runs to 338 residues: MARKGSSIRLSSSRISTLLLFMFATFASFYVAGRLWQESQTRVHLINELDRVTGQGKSAISVDDTLKIIACREQKKTLAALEMELSSARQEGFVSKSPKLADGTETKKRPLVVIGIMTSLGNKKKRDAVRQAWMGTGASLKKLESEKGVIARFVIGRSANKGDSMDKSIDTENSQTDDFIILDDVVEAPEEASKKVKLFFAYAADRWDAQFYAKAIDNIYVNIDALGTTLAAHLENPRAYIGCMKSGEVFSEPNHKWYEPEWWKFGDKKAYFRHAYGEMYVITHALARFVSINRDILHSYAHDDVSTGSWFVGLDVKHVDEGKFCCSAWSSEAICAGV.

The Cytoplasmic segment spans residues 1–12 (MARKGSSIRLSS). A helical; Signal-anchor for type II membrane protein membrane pass occupies residues 13–32 (SRISTLLLFMFATFASFYVA). Residues 33–338 (GRLWQESQTR…WSSEAICAGV (306 aa)) lie on the Lumenal side of the membrane.

Belongs to the glycosyltransferase 31 family. It depends on Mn(2+) as a cofactor. As to expression, expressed in roots, rosette leaves, cauline leaves, stems, flowers and siliques.

The protein resides in the golgi apparatus membrane. It functions in the pathway protein modification; protein glycosylation. Its function is as follows. Possesses hydroxyproline O-galactosyltransferase activity. Transfers galactose from UDP-galactose to hydroxyproline residues in the arabinogalactan proteins (AGPs). Is specific for AGPs containing non-contiguous peptidyl hydroxyproline residues. The addition of galactose onto the peptidyl hydroxyproline residues in AGP core proteins represents the first committed step in arabinogalactan polysaccharide addition. AGP glycans play essential roles in both vegetative and reproductive plant growth. This Arabidopsis thaliana (Mouse-ear cress) protein is Hydroxyproline O-galactosyltransferase HPGT1.